The sequence spans 269 residues: Enoyl-[acyl-carrier-protein] reductase [NADH] (269 aa).

NAD(+) contacts are provided by residues 20–21 (SI), 64–65 (DV), and 95–96 (IG). Residue Y158 participates in substrate binding. K165 and I194 together coordinate NAD(+). Position 266 is a phosphothreonine (T266).

It belongs to the short-chain dehydrogenases/reductases (SDR) family. FabI subfamily. As to quaternary structure, homodimer. Homotetramer. Post-translationally, is phosphorylated in vivo. Phosphorylation on Thr-266 decreases enzymatic activity.

The protein resides in the secreted. The protein localises to the cell wall. It carries out the reaction a 2,3-saturated acyl-[ACP] + NAD(+) = a (2E)-enoyl-[ACP] + NADH + H(+). The catalysed reaction is a 2,3-saturated acyl-CoA + NAD(+) = a (2E)-enoyl-CoA + NADH + H(+). It catalyses the reaction (2E)-octenoyl-CoA + NADH + H(+) = octanoyl-CoA + NAD(+). The enzyme catalyses (2E)-dodecenoyl-CoA + NADH + H(+) = dodecanoyl-CoA + NAD(+). Its pathway is lipid metabolism; mycolic acid biosynthesis. Its activity is regulated as follows. InhA activity is controlled via phosphorylation: phosphorylation on Thr-266 decreases InhA activity and likely negatively regulates biosynthesis of mycolic acids and growth of the bacterium. InhA activity is likely inhibited by activated isoniazid, hexadecynoyl-CoA and octadecynoyl-CoA, which also block the biosynthesis of mycolic acids. The antitubercular pro-drug isoniazid (INH) is oxidatively activated by the catalase-peroxidase KatG and then covalently binds NAD to form an adduct that inhibits the activity of InhA. The inhibitory adduct is the isonicotinic-acyl-NADH where the isonicotinic-acyl group replaces the 4S (and not the 4R) hydrogen of NADH. Similarly, the antitubercular pro-drugs ethionamide (ETH) and prothionamide (PTH) are activated by the flavoprotein monooxygenase EthA, and forms an adduct with NAD (ETH-NAD and PTH-NAD, respectively) that is a tight-binding inhibitor of InhA. In terms of biological role, enoyl-ACP reductase of the type II fatty acid syntase (FAS-II) system, which is involved in the biosynthesis of mycolic acids, a major component of mycobacterial cell walls. Catalyzes the NADH-dependent reduction of the double bond of 2-trans-enoyl-[acyl-carrier protein], an essential step in the fatty acid elongation cycle of the FAS-II pathway. Shows preference for long-chain fatty acyl thioester substrates (&gt;C16), and can also use 2-trans-enoyl-CoAs as alternative substrates. The mycobacterial FAS-II system utilizes the products of the FAS-I system as primers to extend fatty acyl chain lengths up to C56, forming the meromycolate chain that serves as the precursor for final mycolic acids. Its function is as follows. Is the primary target of the first-line antitubercular drug isoniazid (INH) and of the second-line drug ethionamide (ETH). Overexpressed inhA confers INH and ETH resistance to M.smegmatis. The mechanism of isoniazid action against InhA is covalent attachment of the activated form of the drug to the nicotinamide ring of NAD and binding of the INH-NAD adduct to the active site of InhA. Similarly, the ETH-NAD adduct binds InhA. The sequence is that of Enoyl-[acyl-carrier-protein] reductase [NADH] from Mycolicibacterium smegmatis (strain ATCC 700084 / mc(2)155) (Mycobacterium smegmatis).